Consider the following 707-residue polypeptide: E3 ubiquitin-protein ligase Praja-2 (707 aa).

Basic and acidic residues predominate over residues methionine 1 to serine 10. Disordered stretches follow at residues methionine 1–threonine 32, proline 72–alanine 120, and glutamine 250–lysine 314. Residue serine 2 is modified to N-acetylserine. Polar residues-rich tracts occupy residues glutamate 74–aspartate 83 and leucine 109–isoleucine 119. A compositionally biased stretch (basic and acidic residues) spans arginine 257–arginine 276. Over residues glutamate 293–glutamate 308 the composition is skewed to polar residues. A phosphoserine mark is found at serine 306 and serine 320. At serine 339 the chain carries Phosphoserine; by PKA. Disordered regions lie at residues arginine 379–arginine 405 and glutamate 424–leucine 493. Positions threonine 381–valine 390 are enriched in basic and acidic residues. Threonine 385 carries the post-translational modification Phosphothreonine; by PKA. Residues threonine 391–arginine 401 are compositionally biased toward polar residues. At serine 430 the chain carries Phosphoserine. Positions asparagine 465–glutamine 481 are enriched in acidic residues. Positions glutamate 482–threonine 491 are enriched in polar residues. Residues aspartate 530 to proline 707 are interaction with PRKAR1A, PRKAR2A and PRKAR2B. A mediates interaction with TBC1D31 region spans residues tryptophan 549–aspartate 569. The segment at cysteine 633–arginine 674 adopts an RING-type; atypical zinc-finger fold. Residues serine 685–aspartate 701 are compositionally biased toward low complexity. The interval serine 685–proline 707 is disordered.

As to quaternary structure, binds ubiquitin-conjugating enzymes (E2s). In vitro, interacts with the ubiquitin-conjugating enzyme, UBE2D2. The phosphorylated form interacts with PRKAR1A, PRKAR2A and PRKAR2B. Binds the catalytic subunits of cAMP-dependent protein kinase. Interacts with MFHAS1. Interacts with TBC1D31; the interaction is direct and recruits PJA2 to centrosomes.

It localises to the cytoplasm. The protein localises to the cell membrane. The protein resides in the endoplasmic reticulum membrane. Its subcellular location is the golgi apparatus membrane. It is found in the synapse. It localises to the postsynaptic density. The protein localises to the cytoskeleton. The protein resides in the microtubule organizing center. Its subcellular location is the centrosome. The enzyme catalyses S-ubiquitinyl-[E2 ubiquitin-conjugating enzyme]-L-cysteine + [acceptor protein]-L-lysine = [E2 ubiquitin-conjugating enzyme]-L-cysteine + N(6)-ubiquitinyl-[acceptor protein]-L-lysine.. It participates in protein modification; protein ubiquitination. Functionally, has E2-dependent E3 ubiquitin-protein ligase activity. Responsible for ubiquitination of cAMP-dependent protein kinase type I and type II-alpha/beta regulatory subunits and for targeting them for proteasomal degradation. Essential for PKA-mediated long-term memory processes. Through the ubiquitination of MFHAS1, positively regulates the TLR2 signaling pathway that leads to the activation of the downstream p38 and JNK MAP kinases and promotes the polarization of macrophages toward the pro-inflammatory M1 phenotype. Plays a role in ciliogenesis by ubiquitinating OFD1. The polypeptide is E3 ubiquitin-protein ligase Praja-2 (Pja2) (Mus musculus (Mouse)).